Consider the following 148-residue polypeptide: MGRIIFVSFGLLVVFLSLSGTGAALNCASGWSGYDQHCYKVFDKPKSWADAEKFCKKQTSGGHLVSFHSSEETDFVVELVSQTLESQILWMGLSKVWNQCDWGWSNGAKLKYKAWAEESYCVYFSSTKKGWRSRACRLLGHFVCKSPA.

A signal peptide spans 1–24; it reads MGRIIFVSFGLLVVFLSLSGTGAA. 3 cysteine pairs are disulfide-bonded: Cys27–Cys38, Cys55–Cys144, and Cys121–Cys136. Residues 34-145 enclose the C-type lectin domain; that stretch reads YDQHCYKVFD…CRLLGHFVCK (112 aa).

It belongs to the snaclec family. Heterodimer; disulfide-linked. Expressed by the venom gland.

The protein resides in the secreted. Interferes with one step of hemostasis (modulation of platelet aggregation, or coagulation cascade, for example). The chain is Snaclec B1 from Macrovipera lebetinus (Levantine viper).